A 129-amino-acid polypeptide reads, in one-letter code: Urease subunit beta (129 aa).

This sequence belongs to the urease beta subunit family. Heterotrimer of UreA (gamma), UreB (beta) and UreC (alpha) subunits. Three heterotrimers associate to form the active enzyme.

The protein resides in the cytoplasm. The enzyme catalyses urea + 2 H2O + H(+) = hydrogencarbonate + 2 NH4(+). It functions in the pathway nitrogen metabolism; urea degradation; CO(2) and NH(3) from urea (urease route): step 1/1. This chain is Urease subunit beta, found in Photorhabdus laumondii subsp. laumondii (strain DSM 15139 / CIP 105565 / TT01) (Photorhabdus luminescens subsp. laumondii).